The chain runs to 457 residues: Oxysterol-binding protein-related protein 3C (457 aa).

2 disordered regions span residues 37–61 and 363–393; these read NEGV…KGRW and QGDL…KGQK. 2 stretches are compositionally biased toward basic and acidic residues: residues 47–61 and 370–391; these read GGKE…KGRW and GSEK…ETKG.

This sequence belongs to the OSBP family. As to expression, expressed in roots, leaves, stems and flowers.

In terms of biological role, may be involved in the transport of sterols. In Arabidopsis thaliana (Mouse-ear cress), this protein is Oxysterol-binding protein-related protein 3C (ORP3C).